The sequence spans 553 residues: CTP synthase (553 aa).

Residues 1 to 266 (MKYIFVTGGV…GKAVEDLLGL (266 aa)) form an amidoligase domain region. Serine 12 lines the CTP pocket. Serine 12 lines the UTP pocket. 13 to 18 (SLGKGV) serves as a coordination point for ATP. Tyrosine 53 is a binding site for L-glutamine. Residue aspartate 70 participates in ATP binding. The Mg(2+) site is built by aspartate 70 and glutamate 140. Residues 147 to 149 (DIE), 187 to 192 (KTKPTQ), and lysine 223 each bind CTP. UTP is bound by residues 187-192 (KTKPTQ) and lysine 223. Positions 291–541 (TIAIAGKYTE…VAAALQSGPS (251 aa)) constitute a Glutamine amidotransferase type-1 domain. Residue glycine 353 participates in L-glutamine binding. Cysteine 380 serves as the catalytic Nucleophile; for glutamine hydrolysis. L-glutamine is bound by residues 381-384 (LGMQ), glutamate 404, and arginine 464. Residues histidine 514 and glutamate 516 contribute to the active site.

This sequence belongs to the CTP synthase family. In terms of assembly, homotetramer.

It carries out the reaction UTP + L-glutamine + ATP + H2O = CTP + L-glutamate + ADP + phosphate + 2 H(+). It catalyses the reaction L-glutamine + H2O = L-glutamate + NH4(+). The enzyme catalyses UTP + NH4(+) + ATP = CTP + ADP + phosphate + 2 H(+). It participates in pyrimidine metabolism; CTP biosynthesis via de novo pathway; CTP from UDP: step 2/2. Its activity is regulated as follows. Allosterically activated by GTP, when glutamine is the substrate; GTP has no effect on the reaction when ammonia is the substrate. The allosteric effector GTP functions by stabilizing the protein conformation that binds the tetrahedral intermediate(s) formed during glutamine hydrolysis. Inhibited by the product CTP, via allosteric rather than competitive inhibition. Its function is as follows. Catalyzes the ATP-dependent amination of UTP to CTP with either L-glutamine or ammonia as the source of nitrogen. Regulates intracellular CTP levels through interactions with the four ribonucleotide triphosphates. The polypeptide is CTP synthase (Deinococcus geothermalis (strain DSM 11300 / CIP 105573 / AG-3a)).